The following is a 239-amino-acid chain: LexA repressor (239 aa).

Residues 26–46 constitute a DNA-binding region (H-T-H motif); the sequence is FDEMKDALDLASKSGIHRLIT. The disordered stretch occupies residues 80-108; the sequence is RRGFSPSVIEGSLGKPQPAAAPAPAKPVA. Residues serine 159 and lysine 197 each act as for autocatalytic cleavage activity in the active site.

This sequence belongs to the peptidase S24 family. In terms of assembly, homodimer.

The enzyme catalyses Hydrolysis of Ala-|-Gly bond in repressor LexA.. Its function is as follows. Represses a number of genes involved in the response to DNA damage (SOS response), including recA and lexA. In the presence of single-stranded DNA, RecA interacts with LexA causing an autocatalytic cleavage which disrupts the DNA-binding part of LexA, leading to derepression of the SOS regulon and eventually DNA repair. In Rhizobium leguminosarum bv. trifolii (strain WSM2304), this protein is LexA repressor.